Reading from the N-terminus, the 264-residue chain is Tritrans,polycis-undecaprenyl-diphosphate synthase (geranylgeranyl-diphosphate specific) (264 aa).

Aspartate 43 is an active-site residue. Aspartate 43 contributes to the Mg(2+) binding site. Residues 44–47, tryptophan 48, histidine 60, and 88–90 each bind substrate; these read GNRR and STE. Catalysis depends on asparagine 91, which acts as the Proton acceptor. Substrate contacts are provided by residues phenylalanine 92, arginine 94, arginine 213, and 219-221; that span reads RIS. Glutamate 232 contacts Mg(2+).

This sequence belongs to the UPP synthase family. In terms of assembly, homodimer. Mg(2+) serves as cofactor.

The enzyme catalyses geranylgeranyl diphosphate + 7 isopentenyl diphosphate = tri-trans,hepta-cis-undecaprenyl diphosphate + 7 diphosphate. Catalyzes the sequential condensation of isopentenyl diphosphate (IPP) with geranylgeranyl diphosphate (GGPP) to yield (2Z,6Z,10Z,14Z,18Z,22Z,26Z,30E,34E,38E)-undecaprenyl diphosphate (tritrans,heptacis-UPP). It is probably the precursor of glycosyl carrier lipids. This is Tritrans,polycis-undecaprenyl-diphosphate synthase (geranylgeranyl-diphosphate specific) from Pyrococcus abyssi (strain GE5 / Orsay).